Consider the following 473-residue polypeptide: Ribulose bisphosphate carboxylase large chain (473 aa).

Positions 116 and 166 each coordinate substrate. Lysine 168 (proton acceptor) is an active-site residue. A substrate-binding site is contributed by lysine 170. Mg(2+)-binding residues include lysine 194, aspartate 196, and glutamate 197. Position 194 is an N6-carboxylysine (lysine 194). The active-site Proton acceptor is the histidine 287. The substrate site is built by arginine 288, histidine 320, and serine 372.

It belongs to the RuBisCO large chain family. Type I subfamily. Heterohexadecamer of 8 large chains and 8 small chains. Mg(2+) serves as cofactor.

The enzyme catalyses 2 (2R)-3-phosphoglycerate + 2 H(+) = D-ribulose 1,5-bisphosphate + CO2 + H2O. The catalysed reaction is D-ribulose 1,5-bisphosphate + O2 = 2-phosphoglycolate + (2R)-3-phosphoglycerate + 2 H(+). Functionally, ruBisCO catalyzes two reactions: the carboxylation of D-ribulose 1,5-bisphosphate, the primary event in carbon dioxide fixation, as well as the oxidative fragmentation of the pentose substrate. Both reactions occur simultaneously and in competition at the same active site. The chain is Ribulose bisphosphate carboxylase large chain from Cupriavidus metallidurans (strain ATCC 43123 / DSM 2839 / NBRC 102507 / CH34) (Ralstonia metallidurans).